The chain runs to 559 residues: Cytokine-like nuclear factor N-PAC (559 aa).

In terms of domain architecture, PWWP spans 9-70 (VNDLVWAKMK…ETQIKPYQEF (62 aa)). The segment at 106 to 137 (SEQDNRPDPDVEFNKLREGGTESGEETTVNNT) is disordered. The span at 108–125 (QDNRPDPDVEFNKLREGG) shows a compositional bias: basic and acidic residues. Residues 267 to 559 (RNIQASNLKF…SSAVYVRARF (293 aa)) form a dehydrogenase domain region. NAD(+) contacts are provided by residues 277–291 (GFLG…MVKN) and Lys511.

The protein belongs to the HIBADH-related family. NP60 subfamily. Binds to mononucleosomes.

It is found in the chromosome. Functionally, nucleosome-destabilizing factor that is recruited to genes during transcriptional activation and colocalizes with a subset of trimethylated 'Lys-36' histone H3 (H3K36me3)-enriched regions. This chain is Cytokine-like nuclear factor N-PAC, found in Aedes aegypti (Yellowfever mosquito).